Here is a 299-residue protein sequence, read N- to C-terminus: Ectoine dioxygenase (299 aa).

A disordered region spans residues 1–40; that stretch reads MTTTTTNVTDLYPTRGATEVATPRQDPVVWGSPDAPGPVS. Q133 lines the L-ectoine pocket. 2-oxoglutarate is bound at residue K139. Residues H150, D152, and H251 each coordinate Fe cation.

Belongs to the PhyH family. EctD subfamily. As to quaternary structure, homodimer. The cofactor is Fe(2+).

The enzyme catalyses L-ectoine + 2-oxoglutarate + O2 = 5-hydroxyectoine + succinate + CO2. Involved in the biosynthesis of 5-hydroxyectoine, called compatible solute, which helps organisms to survive extreme osmotic stress by acting as a highly soluble organic osmolyte. Catalyzes the 2-oxoglutarate-dependent selective hydroxylation of L-ectoine to yield (4S,5S)-5-hydroxyectoine. The chain is Ectoine dioxygenase from Streptomyces coelicolor (strain ATCC BAA-471 / A3(2) / M145).